Here is a 199-residue protein sequence, read N- to C-terminus: Recombination protein RecR (199 aa).

Residues 57-72 (CSVCGNITEQDPCAIC) form a C4-type zinc finger. In terms of domain architecture, Toprim spans 80–176 (STIMVVEEAK…KVTRLAAGLA (97 aa)).

The protein belongs to the RecR family.

May play a role in DNA repair. It seems to be involved in an RecBC-independent recombinational process of DNA repair. It may act with RecF and RecO. The polypeptide is Recombination protein RecR (Lactobacillus delbrueckii subsp. bulgaricus (strain ATCC BAA-365 / Lb-18)).